A 156-amino-acid chain; its full sequence is Endogenous retrovirus group K member 21 Pro protein (156 aa).

One can recognise a Peptidase A2 domain in the interval 21–96 (FEGLVDTGAD…IPLNLWGRDL (76 aa)). Asp-26 is an active-site residue. In terms of domain architecture, G-patch spans 111–156 (YSPTSQKIMTKMGYIPGKGLGKNEDGIKVPVEAKINQKREGIGYPF).

The protein belongs to the peptidase A2 family. HERV class-II K(HML-2) subfamily. Active as a homodimer. In terms of processing, autoproteolytically processed at the N-terminus. Expected C-terminal autoprocessing not detected. The sequence shown is that of the processed Pro protein.

It catalyses the reaction Processing at the authentic HIV-1 PR recognition site and release of the mature p17 matrix and the p24 capsid protein, as a result of the cleavage of the -SQNY-|-PIVQ- cleavage site.. Functionally, retroviral proteases have roles in the processing of the primary translation products and the maturation of the viral particle. Endogenous Pro proteins may have kept, lost or modified their original function during evolution. In Homo sapiens (Human), this protein is Endogenous retrovirus group K member 21 Pro protein (ERVK-21).